Reading from the N-terminus, the 268-residue chain is Single-stranded DNA-binding protein WHY3, chloroplastic (268 aa).

The N-terminal 75 residues, 1–75 (MSQLLSSPPM…KQRFGDSSSS (75 aa)), are a transit peptide targeting the chloroplast. The interval 93–98 (KGKAAL) is required for ssDNA binding. The Nuclear localization signal motif lies at 171–185 (KGKGSDEGKVRKVLK).

This sequence belongs to the Whirly family. Homotetramer.

Its subcellular location is the plastid. The protein localises to the chloroplast. It is found in the nucleus. Single-stranded DNA-binding protein that functions in both chloroplasts and nucleus. In chloroplasts, maintains plastid genome stability by preventing break-induced and short homology-dependent illegitimate recombinations. In the nucleus, is recruited to a distal element upstream of the kinesin KP1 to mediate the transcriptional repression of KP1. Can bind double-stranded DNA in vivo. The sequence is that of Single-stranded DNA-binding protein WHY3, chloroplastic (WHY3) from Arabidopsis thaliana (Mouse-ear cress).